The primary structure comprises 147 residues: MAESSGNPPAERIGYITRVQSFSACHRLHSLRLSDEENKEVYGKCNNPYGHGHNYKVEVTVRGKIDPVTGMVMNLTDLKKCIEEVIMIPLDHKNLDKDVPYFADVVSTTENLAVYIWDNMAKALPASLPYEIRIHETDKNIVVYRGE.

Residue H26 coordinates Zn(2+). Residue C45 is the Proton acceptor of the active site. 2 residues coordinate Zn(2+): H51 and H53. Catalysis depends on charge relay system residues H92 and E136.

This sequence belongs to the PTPS family. As to quaternary structure, homohexamer formed of two homotrimers in a head to head fashion. Requires Zn(2+) as cofactor.

The enzyme catalyses 7,8-dihydroneopterin 3'-triphosphate = 6-pyruvoyl-5,6,7,8-tetrahydropterin + triphosphate + H(+). It functions in the pathway cofactor biosynthesis; tetrahydrobiopterin biosynthesis; tetrahydrobiopterin from 7,8-dihydroneopterin triphosphate: step 1/3. In terms of biological role, involved in the biosynthesis of tetrahydrobiopterin, an essential cofactor of aromatic amino acid hydroxylases. Catalyzes the transformation of 7,8-dihydroneopterin triphosphate into 6-pyruvoyl tetrahydropterin. This is 6-pyruvoyl tetrahydrobiopterin synthase (pts) from Poecilia reticulata (Guppy).